A 341-amino-acid chain; its full sequence is Delta(1)-pyrroline-2-carboxylate reductase (341 aa).

The Charge relay system role is filled by S47. H48 (proton donor) is an active-site residue. R52 is a substrate binding site. 120–124 is a binding site for NADP(+); it reads HFSAL. T160 serves as a coordination point for substrate. 178–180 is a binding site for NADP(+); that stretch reads DFA. 186–187 provides a ligand contact to substrate; the sequence is RG. The active-site Charge relay system is E188. Residues 229–230 and 305–311 contribute to the NADP(+) site; these read HK and RLPSERR.

The protein belongs to the LDH2/MDH2 oxidoreductase family. As to quaternary structure, homodimer.

The enzyme catalyses L-proline + NAD(+) = 1-pyrroline-2-carboxylate + NADH + H(+). It catalyses the reaction L-proline + NADP(+) = 1-pyrroline-2-carboxylate + NADPH + H(+). Its function is as follows. Catalyzes the reduction of Delta(1)-pyrroline-2-carboxylate (Pyr2C) to L-proline, using NADPH as the electron donor. Is likely involved in a degradation pathway that converts cis- and trans-3-hydroxy-L-proline (c3LHyp and t3LHyp) to L-proline, which would allow S.novella to grow on c3LHyp or t3LHyp as a sole carbon source. In Ancylobacter novellus (strain ATCC 8093 / DSM 506 / JCM 20403 / CCM 1077 / IAM 12100 / NBRC 12443 / NCIMB 10456) (Starkeya novella), this protein is Delta(1)-pyrroline-2-carboxylate reductase.